Reading from the N-terminus, the 294-residue chain is Tryptophan 2,3-dioxygenase (294 aa).

Positions 1–20 (MSEFKGCPFSGAASEAGTKA) are disordered. Substrate is bound by residues 63 to 67 (FIVQH), tyrosine 125, and arginine 129. Histidine 252 contributes to the heme binding site. Threonine 266 is a binding site for substrate.

This sequence belongs to the tryptophan 2,3-dioxygenase family. In terms of assembly, homotetramer. Requires heme as cofactor.

The catalysed reaction is L-tryptophan + O2 = N-formyl-L-kynurenine. It participates in amino-acid degradation; L-tryptophan degradation via kynurenine pathway; L-kynurenine from L-tryptophan: step 1/2. Functionally, heme-dependent dioxygenase that catalyzes the oxidative cleavage of the L-tryptophan (L-Trp) pyrrole ring and converts L-tryptophan to N-formyl-L-kynurenine. Catalyzes the oxidative cleavage of the indole moiety. The polypeptide is Tryptophan 2,3-dioxygenase (Cupriavidus necator (strain ATCC 17699 / DSM 428 / KCTC 22496 / NCIMB 10442 / H16 / Stanier 337) (Ralstonia eutropha)).